Reading from the N-terminus, the 138-residue chain is Large ribosomal subunit protein uL16 (138 aa).

It belongs to the universal ribosomal protein uL16 family. In terms of assembly, part of the 50S ribosomal subunit.

Functionally, binds 23S rRNA and is also seen to make contacts with the A and possibly P site tRNAs. This Acholeplasma laidlawii (strain PG-8A) protein is Large ribosomal subunit protein uL16.